Reading from the N-terminus, the 232-residue chain is Ribonuclease P protein component 3 (232 aa).

The protein belongs to the eukaryotic/archaeal RNase P protein component 3 family. Consists of a catalytic RNA component and at least 4-5 protein subunits.

The protein localises to the cytoplasm. It catalyses the reaction Endonucleolytic cleavage of RNA, removing 5'-extranucleotides from tRNA precursor.. In terms of biological role, part of ribonuclease P, a protein complex that generates mature tRNA molecules by cleaving their 5'-ends. This Methanococcus maripaludis (strain C7 / ATCC BAA-1331) protein is Ribonuclease P protein component 3.